The following is a 556-amino-acid chain: Dihydroxy-acid dehydratase (556 aa).

Cysteine 47 provides a ligand contact to [2Fe-2S] cluster. Mg(2+) is bound at residue aspartate 79. [2Fe-2S] cluster is bound at residue cysteine 120. Positions 121 and 122 each coordinate Mg(2+). Lysine 122 carries the post-translational modification N6-carboxylysine. Cysteine 192 is a [2Fe-2S] cluster binding site. A Mg(2+)-binding site is contributed by glutamate 444. Catalysis depends on serine 470, which acts as the Proton acceptor.

The protein belongs to the IlvD/Edd family. In terms of assembly, homodimer. It depends on [2Fe-2S] cluster as a cofactor. The cofactor is Mg(2+).

It catalyses the reaction (2R)-2,3-dihydroxy-3-methylbutanoate = 3-methyl-2-oxobutanoate + H2O. It carries out the reaction (2R,3R)-2,3-dihydroxy-3-methylpentanoate = (S)-3-methyl-2-oxopentanoate + H2O. The protein operates within amino-acid biosynthesis; L-isoleucine biosynthesis; L-isoleucine from 2-oxobutanoate: step 3/4. It participates in amino-acid biosynthesis; L-valine biosynthesis; L-valine from pyruvate: step 3/4. Functionally, functions in the biosynthesis of branched-chain amino acids. Catalyzes the dehydration of (2R,3R)-2,3-dihydroxy-3-methylpentanoate (2,3-dihydroxy-3-methylvalerate) into 2-oxo-3-methylpentanoate (2-oxo-3-methylvalerate) and of (2R)-2,3-dihydroxy-3-methylbutanoate (2,3-dihydroxyisovalerate) into 2-oxo-3-methylbutanoate (2-oxoisovalerate), the penultimate precursor to L-isoleucine and L-valine, respectively. This chain is Dihydroxy-acid dehydratase, found in Prochlorococcus marinus (strain MIT 9303).